The chain runs to 205 residues: Dephospho-CoA kinase (205 aa).

One can recognise a DPCK domain in the interval 4–204; the sequence is VVGLTGGIAS…QYYLTLATQQ (201 aa). Residue 12–17 participates in ATP binding; it reads ASGKTT.

It belongs to the CoaE family.

It localises to the cytoplasm. The catalysed reaction is 3'-dephospho-CoA + ATP = ADP + CoA + H(+). Its pathway is cofactor biosynthesis; coenzyme A biosynthesis; CoA from (R)-pantothenate: step 5/5. In terms of biological role, catalyzes the phosphorylation of the 3'-hydroxyl group of dephosphocoenzyme A to form coenzyme A. The protein is Dephospho-CoA kinase of Haemophilus ducreyi (strain 35000HP / ATCC 700724).